We begin with the raw amino-acid sequence, 109 residues long: Putative glutaredoxin-C11 (109 aa).

The Glutaredoxin domain maps to 2–108 (AEMVARLASE…PLLKSAGALW (107 aa)). A disulfide bridge connects residues Cys22 and Cys25. Positions 106 to 109 (ALWL) match the Responsive for interaction with TGA factors motif.

Belongs to the glutaredoxin family. CC-type subfamily.

It is found in the cytoplasm. Its subcellular location is the nucleus. In terms of biological role, has a glutathione-disulfide oxidoreductase activity in the presence of NADPH and glutathione reductase. Reduces low molecular weight disulfides and proteins. This chain is Putative glutaredoxin-C11 (GRXC11), found in Oryza sativa subsp. japonica (Rice).